A 76-amino-acid chain; its full sequence is Zinc finger protein 706 (76 aa).

Over residues 1–13 the composition is skewed to low complexity; that stretch reads MARGQQKIQSQQK. 2 disordered regions span residues 1 to 32 and 53 to 76; these read MARGQQKIQSQQKNAKKQAEQKKKQGHDQKAA and TFKQHFESKHPKTPLPPELADVQA. Composition is skewed to basic and acidic residues over residues 17–31 and 53–62; these read KQAEQKKKQGHDQKA and TFKQHFESKH. The C2H2-type zinc finger occupies 39–62; sequence YTCTVCRTQMPDPKTFKQHFESKH.

It localises to the cytoplasm. The protein resides in the nucleus. Its function is as follows. Transcription repressor involved in the exit of embryonic stem cells (ESCs) from self-renewal. The polypeptide is Zinc finger protein 706 (Gallus gallus (Chicken)).